The sequence spans 714 residues: Fatty acid oxidation complex subunit alpha (714 aa).

An enoyl-CoA hydratase region spans residues 1-190 (MEMTSAFTLN…KLGLVDDVVP (190 aa)). The interval 306–714 (APLNSVGILG…FWKTTATDLQ (409 aa)) is 3-hydroxyacyl-CoA dehydrogenase.

In the N-terminal section; belongs to the enoyl-CoA hydratase/isomerase family. This sequence in the central section; belongs to the 3-hydroxyacyl-CoA dehydrogenase family. As to quaternary structure, heterotetramer of two alpha chains (FadJ) and two beta chains (FadI).

The protein localises to the cytoplasm. It carries out the reaction a (3S)-3-hydroxyacyl-CoA = a (2E)-enoyl-CoA + H2O. The catalysed reaction is a 4-saturated-(3S)-3-hydroxyacyl-CoA = a (3E)-enoyl-CoA + H2O. It catalyses the reaction a (3S)-3-hydroxyacyl-CoA + NAD(+) = a 3-oxoacyl-CoA + NADH + H(+). The enzyme catalyses (3S)-3-hydroxybutanoyl-CoA = (3R)-3-hydroxybutanoyl-CoA. It functions in the pathway lipid metabolism; fatty acid beta-oxidation. Its function is as follows. Catalyzes the formation of a hydroxyacyl-CoA by addition of water on enoyl-CoA. Also exhibits 3-hydroxyacyl-CoA epimerase and 3-hydroxyacyl-CoA dehydrogenase activities. The sequence is that of Fatty acid oxidation complex subunit alpha from Escherichia coli O8 (strain IAI1).